The primary structure comprises 288 residues: MHTIKTVLLLGVLTGLFLLAGKIIGGQTGMIIAFFFAMAMNFFAYWFSDKMALKMYRAQEIPYEEAPWLHDMVAELARNAGIPKPRIYLAPTEIPNAFATGRNPKNAVVAVTSGILNILSPEELRGVLAHEIAHIKNRDILISSIAATIGGAISMLAEMAFWSNIFGGNDEDNGIGGLIGSLLLFILAPIAAMIIQMAISRSREYAADATGAEICRCPLSLAKALEKLEMAAHQLAPVAAREVNPGTAHMMIVNPLKGSSIASLFSTHPPTEERIRRLYEMARRMGSV.

A run of 2 helical transmembrane segments spans residues 1–21 and 23–43; these read MHTI…LLAG and IIGG…MNFF. His-130 serves as a coordination point for Zn(2+). The active site involves Glu-131. His-134 provides a ligand contact to Zn(2+). Helical transmembrane passes span 140 to 160 and 175 to 195; these read ILIS…AEMA and IGGL…AMII. Residue Glu-204 participates in Zn(2+) binding.

This sequence belongs to the peptidase M48B family. Requires Zn(2+) as cofactor.

It localises to the cell inner membrane. The protein is Protease HtpX homolog of Persephonella marina (strain DSM 14350 / EX-H1).